The following is a 503-amino-acid chain: Cytochrome P450 7A1 (503 aa).

Residues 4-24 (ISLIWGIAVLVSCCIWFIVGI) traverse the membrane as a helical segment. Cys-444 serves as a coordination point for heme.

Belongs to the cytochrome P450 family. Requires heme as cofactor. Detected in liver (at protein level). Liver.

Its subcellular location is the endoplasmic reticulum membrane. It localises to the microsome membrane. The enzyme catalyses cholesterol + reduced [NADPH--hemoprotein reductase] + O2 = 7alpha-hydroxycholesterol + oxidized [NADPH--hemoprotein reductase] + H2O + H(+). It catalyses the reaction 4beta-hydroxycholesterol + reduced [NADPH--hemoprotein reductase] + O2 = 4beta,7alpha-dihydroxycholesterol + oxidized [NADPH--hemoprotein reductase] + H2O + H(+). It carries out the reaction lathosterol + reduced [NADPH--hemoprotein reductase] + O2 = 7alpha,8alpha-epoxy-5alpha-cholestan-3beta-ol + oxidized [NADPH--hemoprotein reductase] + H2O + H(+). The catalysed reaction is lathosterol + reduced [NADPH--hemoprotein reductase] + O2 = 5alpha-cholestan-7-oxo-3beta-ol + oxidized [NADPH--hemoprotein reductase] + H2O + H(+). The enzyme catalyses 7-dehydrocholesterol + reduced [NADPH--hemoprotein reductase] + O2 = 7-oxocholesterol + oxidized [NADPH--hemoprotein reductase] + H2O + H(+). It catalyses the reaction (24S)-hydroxycholesterol + reduced [NADPH--hemoprotein reductase] + O2 = (24S)-7alpha-dihydroxycholesterol + oxidized [NADPH--hemoprotein reductase] + H2O + H(+). It carries out the reaction (24R)-hydroxycholesterol + reduced [NADPH--hemoprotein reductase] + O2 = (24R)-7alpha-dihydroxycholesterol + oxidized [NADPH--hemoprotein reductase] + H2O + H(+). It participates in lipid metabolism; bile acid biosynthesis. It functions in the pathway steroid metabolism; cholesterol degradation. Its function is as follows. A cytochrome P450 monooxygenase involved in the metabolism of endogenous cholesterol and its oxygenated derivatives (oxysterols). Mechanistically, uses molecular oxygen inserting one oxygen atom into a substrate, and reducing the second into a water molecule, with two electrons provided by NADPH via cytochrome P450 reductase (CPR; NADPH-ferrihemoprotein reductase). Functions as a critical regulatory enzyme of bile acid biosynthesis and cholesterol homeostasis. Catalyzes the hydroxylation of carbon hydrogen bond at 7-alpha position of cholesterol, a rate-limiting step in cholesterol catabolism and bile acid biosynthesis. 7-alpha hydroxylates several oxysterols, including 4beta-hydroxycholesterol and 24-hydroxycholesterol. Catalyzes the oxidation of the 7,8 double bond of 7-dehydrocholesterol and lathosterol with direct and predominant formation of the 7-keto derivatives. The sequence is that of Cytochrome P450 7A1 (Cyp7a1) from Rattus norvegicus (Rat).